The sequence spans 146 residues: uncharacterized protein (146 aa).

In terms of domain architecture, N-acetyltransferase spans 7 to 146 (LEINYKTDEL…EGHDVLLWKP (140 aa)).

This is an uncharacterized protein from Staphylococcus aureus (strain COL).